Consider the following 336-residue polypeptide: Dihydroorotate dehydrogenase (quinone) (336 aa).

FMN contacts are provided by residues A62–K66 and T86. K66 is a substrate binding site. N111–F115 serves as a coordination point for substrate. Residues N139 and N172 each contribute to the FMN site. N172 is a binding site for substrate. S175 acts as the Nucleophile in catalysis. N177 provides a ligand contact to substrate. FMN-binding residues include K217 and T245. N246–T247 is a substrate binding site. FMN is bound by residues G268, G297, and Y318 to S319.

The protein belongs to the dihydroorotate dehydrogenase family. Type 2 subfamily. In terms of assembly, monomer. FMN is required as a cofactor.

It localises to the cell membrane. It carries out the reaction (S)-dihydroorotate + a quinone = orotate + a quinol. The protein operates within pyrimidine metabolism; UMP biosynthesis via de novo pathway; orotate from (S)-dihydroorotate (quinone route): step 1/1. Catalyzes the conversion of dihydroorotate to orotate with quinone as electron acceptor. The polypeptide is Dihydroorotate dehydrogenase (quinone) (Escherichia coli O17:K52:H18 (strain UMN026 / ExPEC)).